The sequence spans 493 residues: MNQFPWLSIIILFPLFAAFFIPLLPSRENQTVRWYTLGICLLDFLVMSYIFGYYYDFHNSSFQFKESIEWIPTIGFKWALGVDGLSMGLILLTGLVTTLAVLAAWPITCNPKLFYFLMLVMYSGQIGLFTSQDLFLFFLMWELELIPIYLLISLWGGRRRLYAATKFIFYTAIGSLFLFIATFTVCFYGANIATWHFEDLAEKEYPFILEKILYLGFGFAYAVKLPIIPFHTWLPDTHGEAHYSTCMLLAGILLKMGGYGWIRINMTLFPNAHAYFAPWLVILGTVQIIYAASVCLSQKNLKRRIAYSSISHMGFVLIGICSFTNIGLSGAICQMISHGLIGASLFFLAGTTYDRIRTVSLSEMGGIALKMPKMFSMFTGFSLASLALPTMSGFVAEMMIFLGIISSTFYSPSFRCFIILFQALGVILTPIYLLSMLRQMFYGVDTFHFESMSFIDSGPREVFIIVSLFIPVIIIGLYPNILLSIWQNALSIL.

14 helical membrane passes run 4-24 (FPWL…IPLL), 34-54 (WYTL…FGYY), 87-107 (MGLI…AWPI), 111-131 (PKLF…LFTS), 134-154 (LFLF…LISL), 167-187 (FIFY…TVCF), 212-232 (ILYL…PFHT), 242-262 (HYST…YGWI), 276-296 (FAPW…SVCL), 313-333 (MGFV…GAIC), 334-354 (QMIS…TTYD), 385-405 (SLAL…LGII), 417-437 (FIIL…LSML), and 462-482 (VFII…PNIL).

This sequence belongs to the complex I subunit 4 family.

Its subcellular location is the plastid. It is found in the chloroplast thylakoid membrane. It catalyses the reaction a plastoquinone + NADH + (n+1) H(+)(in) = a plastoquinol + NAD(+) + n H(+)(out). The catalysed reaction is a plastoquinone + NADPH + (n+1) H(+)(in) = a plastoquinol + NADP(+) + n H(+)(out). The protein is NAD(P)H-quinone oxidoreductase chain 4, chloroplastic of Chara vulgaris (Common stonewort).